The sequence spans 97 residues: Protein RALF-like 2 (97 aa).

The signal sequence occupies residues 1 to 25 (MEARHMLVTILLLSFVFMNIMKVEA). Cystine bridges form between C42/C49 and C61/C67.

It belongs to the plant rapid alkalinization factor (RALF) family.

Its subcellular location is the secreted. In terms of biological role, cell signaling peptide that may regulate plant stress, growth, and development. Mediates a rapid alkalinization of extracellular space by mediating a transient increase in the cytoplasmic Ca(2+) concentration leading to a calcium-dependent signaling events through a cell surface receptor and a concomitant activation of some intracellular mitogen-activated protein kinases. The protein is Protein RALF-like 2 (RALFL2) of Arabidopsis thaliana (Mouse-ear cress).